The following is a 152-amino-acid chain: Large-conductance mechanosensitive channel (152 aa).

The next 3 helical transmembrane spans lie at 14–34 (VVDM…VKSL), 39–59 (LMPG…FLVI), and 85–105 (GLFI…FLVI).

This sequence belongs to the MscL family. In terms of assembly, homopentamer.

The protein resides in the cell inner membrane. Functionally, channel that opens in response to stretch forces in the membrane lipid bilayer. May participate in the regulation of osmotic pressure changes within the cell. The chain is Large-conductance mechanosensitive channel from Syntrophus aciditrophicus (strain SB).